A 129-amino-acid chain; its full sequence is Large ribosomal subunit protein uL22 (129 aa).

It belongs to the universal ribosomal protein uL22 family. Part of the 50S ribosomal subunit.

Its function is as follows. This protein binds specifically to 23S rRNA; its binding is stimulated by other ribosomal proteins, e.g. L4, L17, and L20. It is important during the early stages of 50S assembly. It makes multiple contacts with different domains of the 23S rRNA in the assembled 50S subunit and ribosome. The globular domain of the protein is located near the polypeptide exit tunnel on the outside of the subunit, while an extended beta-hairpin is found that lines the wall of the exit tunnel in the center of the 70S ribosome. This chain is Large ribosomal subunit protein uL22, found in Onion yellows phytoplasma (strain OY-M).